A 1229-amino-acid polypeptide reads, in one-letter code: DNA-directed RNA polymerase subunit beta (1229 aa).

It belongs to the RNA polymerase beta chain family. As to quaternary structure, the RNAP catalytic core consists of 2 alpha, 1 beta, 1 beta' and 1 omega subunit. When a sigma factor is associated with the core the holoenzyme is formed, which can initiate transcription.

The enzyme catalyses RNA(n) + a ribonucleoside 5'-triphosphate = RNA(n+1) + diphosphate. Its function is as follows. DNA-dependent RNA polymerase catalyzes the transcription of DNA into RNA using the four ribonucleoside triphosphates as substrates. This Roseiflexus sp. (strain RS-1) protein is DNA-directed RNA polymerase subunit beta.